A 440-amino-acid polypeptide reads, in one-letter code: Aclacinomycin-T 2-deoxy-L-fucose transferase (440 aa).

It carries out the reaction dTDP-2-deoxy-beta-L-fucose + aclacinomycin T = aclacinomycin S + dTDP + H(+). Involved in the biosynthesis of the trisaccharide moiety characteristic of the antitumor drug aclacinomycins. In the first reaction, AknK catalyzes the transfer of 2-deoxy-beta-L-fucose from the activated donor dTDP-2-deoxy-beta-L-fucose to the mono-glycosylated aclacinomycin T (rhodosaminyl aklavinone), forming the di-glycosylated aclacinomycin S (L-2-deoxyfucosyl-L-rhodosaminyl aklavinone). It can also catalyze the addition of an alternate dTDP-L-sugar, dTDP-L-daunosamine, to aclacinomycin T and the addition of 2-deoxy-beta-L-fucose to the mono-glycosylated aglycones (monoglycosylated anthracyclines) such as daunomycin (daunorubicin), adriamycin (doxorubicin) and idarubicin. In vitro, AknK also catalyzes the addition of a second L-2-deoxyfucosyl moiety from dTDP-2-deoxy-beta-L-fucose, albeit with reduced activity, to the natural disaccharide chain of aclacinomycin S to produce L-deoxyfucosyl-L-deoxyfucosyl-L-rhodosaminyl aklavinone (2-deoxy-alpha-D-fucosyl-aclacinomycin S), a variant of the natural aclacinomycin A. The polypeptide is Aclacinomycin-T 2-deoxy-L-fucose transferase (Streptomyces galilaeus).